The sequence spans 226 residues: Ribosome maturation factor RimP (226 aa).

The interval 190-226 (VFPDTTRPQPGGKTGQRKKAQPKKPARGGAPHDDTTD) is disordered. Residues 204–215 (GQRKKAQPKKPA) show a composition bias toward basic residues.

Belongs to the RimP family.

The protein localises to the cytoplasm. In terms of biological role, required for maturation of 30S ribosomal subunits. The sequence is that of Ribosome maturation factor RimP from Nitratidesulfovibrio vulgaris (strain DSM 19637 / Miyazaki F) (Desulfovibrio vulgaris).